Here is a 644-residue protein sequence, read N- to C-terminus: Forkhead box protein O (644 aa).

The disordered stretch occupies residues 39–75 (FEPQTRARSNTWPCPRPENFVEPPDELDSTKASNQQL). The residue at position 49 (threonine 49) is a Phosphothreonine; by PKB/AKT1. Serine 80 carries the phosphoserine modification. The segment at residues 100-206 (WGNLSYADLI…ETSRYEKRRG (107 aa)) is a DNA-binding region (fork-head). 5 disordered regions span residues 187-210 (KSVRRRAASMETSRYEKRRGRAKK), 222-276 (GLND…SPIR), 329-386 (QQQQ…QTLQ), 412-435 (SPNSVTTTMSPAYPNSEPSSDSLN), and 578-612 (QQHLQQQQQHHQHQQQLLLNNNNNNNNNNSSNSSL). Position 195 is a phosphoserine; by PKB/AKT1 (serine 195). Polar residues-rich tracts occupy residues 226-235 (ATPSPSSSVS) and 261-270 (RASSNASSCG). The residue at position 264 (serine 264) is a Phosphoserine; by PKB/AKT1. A phosphoserine mark is found at serine 267, serine 268, and serine 273. The span at 329–340 (QQQQQQQQQQQQ) shows a compositional bias: low complexity. A compositionally biased stretch (pro residues) spans 350–359 (SQPPPPPYQP). Residues 360-374 (PQLQQQQQQQPSYSL) show a composition bias toward low complexity. Residues 412 to 421 (SPNSVTTTMS) are compositionally biased toward polar residues.

Interacts with melt.

It localises to the cytoplasm. It is found in the nucleus. In terms of biological role, transcription factor involved in the regulation of the insulin signaling pathway. Consistently activates both the downstream target Thor\d4EBP and the feedback control target InR. Involved in negative regulation of the cell cycle, modulating cell growth and proliferation. In response to cellular stresses, such as nutrient deprivation or increased levels of reactive oxygen species, foxo is activated and inhibits growth through the action of target genes such as Thor. Foxo activated in the adult fat body can regulate lifespan in adults; an insulin peptide itself may function as one secondary messenger of insulin-regulated aging. Also regulates Lip4, homolog of human acid lipases, thereby acting as a key modulator of lipid metabolism by insulin signaling and integrates insulin responses to glucose and lipid homeostasis. The polypeptide is Forkhead box protein O (Drosophila pseudoobscura pseudoobscura (Fruit fly)).